The sequence spans 610 residues: Chaperone protein DnaK (610 aa).

T173 carries the post-translational modification Phosphothreonine; by autocatalysis. Low complexity predominate over residues 579–592 (QQQQAQGANAGQNN). The segment at 579–610 (QQQQAQGANAGQNNDSTVEDAEFKEVKDDDKK) is disordered. Residues 599-610 (AEFKEVKDDDKK) show a composition bias toward basic and acidic residues.

Belongs to the heat shock protein 70 family.

Its function is as follows. Acts as a chaperone. In Staphylococcus aureus (strain bovine RF122 / ET3-1), this protein is Chaperone protein DnaK.